The primary structure comprises 154 residues: Methylglyoxal synthase (154 aa).

Residues 6 to 154 (GALPSRKQIA…AYIAERTKKL (149 aa)) enclose the MGS-like domain. Residues H19, K23, 45 to 48 (TGTT), and 65 to 66 (SG) each bind substrate. D71 serves as the catalytic Proton donor/acceptor. Position 98 (H98) interacts with substrate.

Belongs to the methylglyoxal synthase family.

It carries out the reaction dihydroxyacetone phosphate = methylglyoxal + phosphate. Functionally, catalyzes the formation of methylglyoxal from dihydroxyacetone phosphate. The polypeptide is Methylglyoxal synthase (Saccharophagus degradans (strain 2-40 / ATCC 43961 / DSM 17024)).